A 504-amino-acid chain; its full sequence is Ribosomal protein uS12 methylthiotransferase RimO (504 aa).

Positions lysine 21–proline 131 constitute an MTTase N-terminal domain. Positions 30, 66, 95, 186, 190, and 193 each coordinate [4Fe-4S] cluster. Positions leucine 172–glutamate 408 constitute a Radical SAM core domain. The region spanning serine 411–glutamate 487 is the TRAM domain.

The protein belongs to the methylthiotransferase family. RimO subfamily. It depends on [4Fe-4S] cluster as a cofactor.

The protein localises to the cytoplasm. It catalyses the reaction L-aspartate(89)-[ribosomal protein uS12]-hydrogen + (sulfur carrier)-SH + AH2 + 2 S-adenosyl-L-methionine = 3-methylsulfanyl-L-aspartate(89)-[ribosomal protein uS12]-hydrogen + (sulfur carrier)-H + 5'-deoxyadenosine + L-methionine + A + S-adenosyl-L-homocysteine + 2 H(+). Its function is as follows. Catalyzes the methylthiolation of an aspartic acid residue of ribosomal protein uS12. The sequence is that of Ribosomal protein uS12 methylthiotransferase RimO from Deinococcus radiodurans (strain ATCC 13939 / DSM 20539 / JCM 16871 / CCUG 27074 / LMG 4051 / NBRC 15346 / NCIMB 9279 / VKM B-1422 / R1).